The primary structure comprises 370 residues: tRNA-specific 2-thiouridylase MnmA (370 aa).

Residues 7-14 and M34 each bind ATP; that span reads ALSGGVDS. The interval 104 to 106 is interaction with target base in tRNA; the sequence is NPD. C109 serves as the catalytic Nucleophile. Cysteines 109 and 202 form a disulfide. G134 is an ATP binding site. The segment at 152–154 is interaction with tRNA; it reads KDQ. C202 (cysteine persulfide intermediate) is an active-site residue. The tract at residues 308–309 is interaction with tRNA; the sequence is RY.

The protein belongs to the MnmA/TRMU family.

It localises to the cytoplasm. The enzyme catalyses S-sulfanyl-L-cysteinyl-[protein] + uridine(34) in tRNA + AH2 + ATP = 2-thiouridine(34) in tRNA + L-cysteinyl-[protein] + A + AMP + diphosphate + H(+). Catalyzes the 2-thiolation of uridine at the wobble position (U34) of tRNA, leading to the formation of s(2)U34. This is tRNA-specific 2-thiouridylase MnmA from Mycoplasma mobile (strain ATCC 43663 / 163K / NCTC 11711) (Mesomycoplasma mobile).